A 460-amino-acid polypeptide reads, in one-letter code: Vitamin K-dependent protein C (460 aa).

The signal sequence occupies residues 1 to 18 (MWQFRVFLLLMSTWGISS). Residues 19 to 41 (IPAHPDPVFSSSEHAHQVLRVRR) constitute a propeptide that is removed on maturation. The region spanning 42-87 (ANSFLEEMRPGSLERECMEEICDFEEAQEIFQNVEDTLAFWIKYFD) is the Gla domain. 10 positions are modified to 4-carboxyglutamate: E47, E48, E55, E57, E60, E61, E66, E67, E70, and E76. C58 and C63 form a disulfide bridge. Cystine bridges form between C91–C110, C100–C105, C104–C119, C121–C130, C139–C150, C146–C159, C161–C174, C182–C319, and C238–C254. EGF-like domains follow at residues 96-131 (LDHQ…KFCQ) and 135-175 (RFQD…MRCK). (3R)-3-hydroxyaspartate is present on D112. In terms of domain architecture, Peptidase S1 spans 213-449 (VNGTLTKQGD…YLKWIHSYIG (237 aa)). An N-linked (GlcNAc...) asparagine glycan is attached at N214. H253 (charge relay system) is an active-site residue. N-linked (GlcNAc...) asparagine glycosylation occurs at N290. Catalysis depends on D299, which acts as the Charge relay system. A glycan (N-linked (GlcNAc...) asparagine) is linked at N354. 2 disulfide bridges follow: C372-C386 and C397-C425. Catalysis depends on S401, which acts as the Charge relay system.

It belongs to the peptidase S1 family. Synthesized as a single chain precursor, which is cleaved into a light chain and a heavy chain held together by a disulfide bond. The enzyme is then activated by thrombin, which cleaves a tetradecapeptide from the amino end of the heavy chain; this reaction, which occurs at the surface of endothelial cells, is strongly promoted by thrombomodulin. The vitamin K-dependent, enzymatic carboxylation of some Glu residues allows the modified protein to bind calcium. Post-translationally, the iron and 2-oxoglutarate dependent 3-hydroxylation of aspartate and asparagine is (R) stereospecific within EGF domains. Plasma; synthesized in the liver.

Its subcellular location is the secreted. The protein localises to the golgi apparatus. It is found in the endoplasmic reticulum. The catalysed reaction is Degradation of blood coagulation factors Va and VIIIa.. Protein C is a vitamin K-dependent serine protease that regulates blood coagulation by inactivating factors Va and VIIIa in the presence of calcium ions and phospholipids. Exerts a protective effect on the endothelial cell barrier function. The protein is Vitamin K-dependent protein C (Proc) of Mus musculus (Mouse).